Reading from the N-terminus, the 873-residue chain is Putative receptor-like protein kinase At5g39000 (873 aa).

The N-terminal stretch at methionine 1–glycine 21 is a signal peptide. Topologically, residues alanine 22–threonine 445 are extracellular. 9 N-linked (GlcNAc...) asparagine glycosylation sites follow: asparagine 49, asparagine 64, asparagine 138, asparagine 168, asparagine 216, asparagine 266, asparagine 300, asparagine 340, and asparagine 437. The chain crosses the membrane as a helical span at residues leucine 446–methionine 466. Topologically, residues lysine 467–arginine 873 are cytoplasmic. Residues serine 472–proline 494 are disordered. The Protein kinase domain occupies phenylalanine 518–alanine 803. ATP-binding positions include isoleucine 524 to valine 532 and lysine 547. Catalysis depends on aspartate 646, which acts as the Proton acceptor. The segment at leucine 813–threonine 843 is disordered. The span at serine 833–threonine 843 shows a compositional bias: polar residues.

The protein belongs to the protein kinase superfamily. Ser/Thr protein kinase family.

It is found in the membrane. The protein is Putative receptor-like protein kinase At5g39000 of Arabidopsis thaliana (Mouse-ear cress).